The chain runs to 358 residues: Gap junction alpha-5 protein (358 aa).

The Cytoplasmic segment spans residues Met1–Thr19. Residues Val20–Ala40 traverse the membrane as a helical segment. Over Ala41–Arg76 the chain is Extracellular. The helical transmembrane segment at Tyr77–Met97 threads the bilayer. Residues His98–Glu164 lie on the Cytoplasmic side of the membrane. The chain crosses the membrane as a helical span at residues Val165 to Cys185. The Extracellular portion of the chain corresponds to Arg186–Asn205. Residues Val206–Leu226 form a helical membrane-spanning segment. The Cytoplasmic segment spans residues Tyr227–Val358. 2 disordered regions span residues Arg242–Thr262 and Ser318–Val358. Residues Ser353 and Ser357 each carry the phosphoserine modification.

It belongs to the connexin family. Alpha-type (group II) subfamily. As to quaternary structure, a connexon is composed of a hexamer of connexins. Abundantly expressed in the lung, also expressed in the kidney and heart.

It is found in the cell membrane. The protein localises to the cell junction. Its subcellular location is the gap junction. Its function is as follows. One gap junction consists of a cluster of closely packed pairs of transmembrane channels, the connexons, through which materials of low MW diffuse from one cell to a neighboring cell. The chain is Gap junction alpha-5 protein (Gja5) from Mus musculus (Mouse).